The primary structure comprises 338 residues: Lipoate-protein ligase A (338 aa).

A BPL/LPL catalytic domain is found at 29-216 (PADQRVLFLW…AYCEHYQQQV (188 aa)). Residues arginine 71, 76-79 (GAVF), and lysine 134 each bind ATP. Lysine 134 contacts (R)-lipoate.

Belongs to the LplA family. In terms of assembly, monomer.

The protein localises to the cytoplasm. The enzyme catalyses L-lysyl-[lipoyl-carrier protein] + (R)-lipoate + ATP = N(6)-[(R)-lipoyl]-L-lysyl-[lipoyl-carrier protein] + AMP + diphosphate + H(+). Its pathway is protein modification; protein lipoylation via exogenous pathway; protein N(6)-(lipoyl)lysine from lipoate: step 1/2. It participates in protein modification; protein lipoylation via exogenous pathway; protein N(6)-(lipoyl)lysine from lipoate: step 2/2. Catalyzes both the ATP-dependent activation of exogenously supplied lipoate to lipoyl-AMP and the transfer of the activated lipoyl onto the lipoyl domains of lipoate-dependent enzymes. This is Lipoate-protein ligase A from Vibrio cholerae serotype O1 (strain ATCC 39541 / Classical Ogawa 395 / O395).